A 370-amino-acid chain; its full sequence is Putative agmatine deiminase (370 aa).

Cys361 serves as the catalytic Amidino-cysteine intermediate.

This sequence belongs to the agmatine deiminase family.

It carries out the reaction agmatine + H2O = N-carbamoylputrescine + NH4(+). The polypeptide is Putative agmatine deiminase (Shewanella baltica (strain OS155 / ATCC BAA-1091)).